The following is a 492-amino-acid chain: UDP-glucosyl transferase 73DL1 (492 aa).

Residue His-27 is the Proton acceptor of the active site. The active-site Charge relay is the Asp-131. UDP-binding residues include Trp-352, Val-353, His-370, Thr-375, Glu-378, and Tyr-392.

This sequence belongs to the UDP-glycosyltransferase family. As to expression, mainly expressed in flowers, flower buds and young leaves, and, to a lesser extent, in old leaves, stems and roots.

Its pathway is secondary metabolite biosynthesis; terpenoid biosynthesis. In terms of biological role, component of the oleanane-type triterpene saponins (e.g. saponarioside A and saponarioside B) biosynthetic pathway, leading to the production of natural products with detergent properties used as traditional sources of soap. A glycosyltransferase that mediates the conversion of QA-mono to QA-di via the elongation of the C-3 sugar chain with a D-galactose. This chain is UDP-glucosyl transferase 73DL1, found in Saponaria officinalis (Common soapwort).